Reading from the N-terminus, the 421-residue chain is Forkhead box protein fkh-4 (421 aa).

Positions 118 to 218 (RPPISYVALC…SDADFDFFRK (101 aa)) form a DNA-binding region, fork-head.

It localises to the nucleus. Functionally, transcription factor. Regulates expression of a class of small RNAs, known as 21U-RNAs, perhaps acting redundantly with fkh-3 and fkh-5. The chain is Forkhead box protein fkh-4 from Caenorhabditis elegans.